The following is a 198-amino-acid chain: Guanylyl cyclase-activating protein 2 (198 aa).

A lipid anchor (N-myristoyl glycine) is attached at Gly2. EF-hand domains lie at 16–51 (DVAELQEWYKKFVVECPSGTLFMHEFKRFFGVQDNH), 52–87 (EAAEYIENMFRAFDKNGDNTIDFLEYVAALNLVLRG), 88–123 (KLEHKLRWTFKVYDKDGNGCIDKPELLEIVESIYKL), and 139–174 (TPEEVVDRIFQLVDENGDGQLSLDEFIDGARKDKWV). Residues Asp65, Asn67, Asp69, Thr71, Glu76, Asp101, Asp103, Asn105, Cys107, Glu112, Asp152, Asn154, Asp156, Gln158, and Glu163 each contribute to the Ca(2+) site.

In terms of assembly, undergoes dimerization at low calcium ions concentration, while the presence of calcium ions inhibits its dimerization. Dimerization correlates with its ability to activate GC. As to expression, retina and pineal gland.

In terms of biological role, stimulates synthesis of cGMP in photoreceptors. Thought to mediate Ca(2+)-sensitive regulation of retinal guanylyl cyclase (GC), a key event in recovery of the dark state of rod photoreceptors following light exposure. This Gallus gallus (Chicken) protein is Guanylyl cyclase-activating protein 2 (GUCA1B).